The primary structure comprises 293 residues: Release factor glutamine methyltransferase (293 aa).

S-adenosyl-L-methionine-binding positions include 130 to 134 (GTGSG), D153, W182, and N199. Residue 199-202 (NPPY) participates in substrate binding.

This sequence belongs to the protein N5-glutamine methyltransferase family. PrmC subfamily.

The enzyme catalyses L-glutaminyl-[peptide chain release factor] + S-adenosyl-L-methionine = N(5)-methyl-L-glutaminyl-[peptide chain release factor] + S-adenosyl-L-homocysteine + H(+). Methylates the class 1 translation termination release factors RF1/PrfA and RF2/PrfB on the glutamine residue of the universally conserved GGQ motif. The polypeptide is Release factor glutamine methyltransferase (Prochlorococcus marinus (strain SARG / CCMP1375 / SS120)).